The sequence spans 467 residues: A-type ATP synthase subunit B (467 aa).

The protein belongs to the ATPase alpha/beta chains family. In terms of assembly, has multiple subunits with at least A(3), B(3), C, D, E, F, H, I and proteolipid K(x).

It is found in the cell membrane. In terms of biological role, component of the A-type ATP synthase that produces ATP from ADP in the presence of a proton gradient across the membrane. The B chain is a regulatory subunit. The protein is A-type ATP synthase subunit B of Methanosphaera stadtmanae (strain ATCC 43021 / DSM 3091 / JCM 11832 / MCB-3).